The primary structure comprises 354 residues: Uroporphyrinogen decarboxylase (354 aa).

Substrate contacts are provided by residues 27-31, Asp77, Tyr154, Thr209, and His327; that span reads RQAGR.

Belongs to the uroporphyrinogen decarboxylase family. Homodimer.

The protein localises to the cytoplasm. It catalyses the reaction uroporphyrinogen III + 4 H(+) = coproporphyrinogen III + 4 CO2. The protein operates within porphyrin-containing compound metabolism; protoporphyrin-IX biosynthesis; coproporphyrinogen-III from 5-aminolevulinate: step 4/4. In terms of biological role, catalyzes the decarboxylation of four acetate groups of uroporphyrinogen-III to yield coproporphyrinogen-III. In Serratia proteamaculans (strain 568), this protein is Uroporphyrinogen decarboxylase.